The sequence spans 253 residues: Triosephosphate isomerase, cytosolic (253 aa).

Asparagine 10 and lysine 12 together coordinate substrate. The active-site Electrophile is the histidine 96. The active-site Proton acceptor is the glutamate 166.

This sequence belongs to the triosephosphate isomerase family. As to quaternary structure, homodimer. Starchy endosperm.

Its subcellular location is the cytoplasm. It carries out the reaction D-glyceraldehyde 3-phosphate = dihydroxyacetone phosphate. It participates in carbohydrate biosynthesis; gluconeogenesis. It functions in the pathway carbohydrate degradation; glycolysis; D-glyceraldehyde 3-phosphate from glycerone phosphate: step 1/1. This Hordeum vulgare (Barley) protein is Triosephosphate isomerase, cytosolic.